The following is a 124-amino-acid chain: Small ribosomal subunit protein uS12 (124 aa).

D89 is subject to 3-methylthioaspartic acid. A disordered region spans residues 105–124; that stretch reads SGVSDRRQGRSKYGAKRPKS. The segment covering 113-124 has biased composition (basic residues); the sequence is GRSKYGAKRPKS.

This sequence belongs to the universal ribosomal protein uS12 family. Part of the 30S ribosomal subunit. Contacts proteins S8 and S17. May interact with IF1 in the 30S initiation complex.

Functionally, with S4 and S5 plays an important role in translational accuracy. Its function is as follows. Interacts with and stabilizes bases of the 16S rRNA that are involved in tRNA selection in the A site and with the mRNA backbone. Located at the interface of the 30S and 50S subunits, it traverses the body of the 30S subunit contacting proteins on the other side and probably holding the rRNA structure together. The combined cluster of proteins S8, S12 and S17 appears to hold together the shoulder and platform of the 30S subunit. The sequence is that of Small ribosomal subunit protein uS12 from Colwellia psychrerythraea (strain 34H / ATCC BAA-681) (Vibrio psychroerythus).